The following is a 350-amino-acid chain: MFS transporter OpS2 (350 aa).

8 consecutive transmembrane segments (helical) span residues 3–23 (FLAG…VADL), 34–54 (GYFF…GGIL), 65–85 (WGAV…LPET), 141–161 (FMTC…NLAI), 174–194 (AIIL…ASVV), 227–247 (MCEN…VFGW), 253–273 (IFWF…SLIF), and 312–332 (PLLG…ICWA).

Belongs to the major facilitator superfamily.

Its subcellular location is the cell membrane. Functionally, MFS transporter; part of the gene cluster that mediates the biosynthesis of the bibenzoquinone oosporein, a metabolite required for fungal virulence that acts by evading host immunity to facilitate fungal multiplication in insects. The function of this putative MFS transporter remains unclear since its deletion leads to increased oosporein production. In Beauveria bassiana (strain ARSEF 2860) (White muscardine disease fungus), this protein is MFS transporter OpS2.